We begin with the raw amino-acid sequence, 211 residues long: Major fimbrial subunit (211 aa).

The first 20 residues, 1-20 (MKKTLLGSLILLAFAGNVQA), serve as a signal peptide directing secretion. A disulfide bond links Cys43 and Cys83.

This sequence belongs to the fimbrial protein family.

Its subcellular location is the fimbrium. Its function is as follows. Mediates adherence to oropharyngeal epithelial cells. Helps the airway colonization process. This Haemophilus influenzae protein is Major fimbrial subunit (hifA).